The primary structure comprises 262 residues: Thiazole synthase (262 aa).

Residue Lys96 is the Schiff-base intermediate with DXP of the active site. 1-deoxy-D-xylulose 5-phosphate contacts are provided by residues Gly157, 184–185, and 206–207; these read AG and NT.

The protein belongs to the ThiG family. Homotetramer. Forms heterodimers with either ThiH or ThiS.

It is found in the cytoplasm. The catalysed reaction is [ThiS sulfur-carrier protein]-C-terminal-Gly-aminoethanethioate + 2-iminoacetate + 1-deoxy-D-xylulose 5-phosphate = [ThiS sulfur-carrier protein]-C-terminal Gly-Gly + 2-[(2R,5Z)-2-carboxy-4-methylthiazol-5(2H)-ylidene]ethyl phosphate + 2 H2O + H(+). The protein operates within cofactor biosynthesis; thiamine diphosphate biosynthesis. Catalyzes the rearrangement of 1-deoxy-D-xylulose 5-phosphate (DXP) to produce the thiazole phosphate moiety of thiamine. Sulfur is provided by the thiocarboxylate moiety of the carrier protein ThiS. In vitro, sulfur can be provided by H(2)S. This is Thiazole synthase from Legionella pneumophila (strain Lens).